The sequence spans 376 residues: 1-acyl-sn-glycerol-3-phosphate acyltransferase gamma (376 aa).

Residues 1-124 (MGLLAFLKTQ…LGSSKVLAKK (124 aa)) are Cytoplasmic-facing. The short motif at 96–101 (HNFEID) is the HXXXXD motif element. A helical membrane pass occupies residues 125-145 (ELLYVPLIGWTWYFLEIVFCK). The Lumenal portion of the chain corresponds to 146-316 (RKWEEDRDTV…TLLNFLSWAT (171 aa)). Residues 317–339 (ILLSPLFSFVLGVFASGSPLLIL) form a helical membrane-spanning segment. The Cytoplasmic segment spans residues 340 to 376 (TFLGFVGAASFGVRRLIGVTEIEKGSSYGNQEFKKKE).

It belongs to the 1-acyl-sn-glycerol-3-phosphate acyltransferase family.

It localises to the endoplasmic reticulum membrane. Its subcellular location is the nucleus envelope. It carries out the reaction a 1-acyl-sn-glycero-3-phosphate + an acyl-CoA = a 1,2-diacyl-sn-glycero-3-phosphate + CoA. The catalysed reaction is pentadecanoyl-CoA + 1-(9Z-octadecenoyl)-sn-glycero-3-phosphate = 1-(9Z)-octadecenoyl-2-pentadecanoyl-sn-glycero-3-phosphate + CoA. It catalyses the reaction heptadecanoyl-CoA + 1-(9Z-octadecenoyl)-sn-glycero-3-phosphate = 1-(9Z)-octadecenoyl-2-heptadecanoyl-sn-glycero-3-phosphate + CoA. The enzyme catalyses 1-(9Z-octadecenoyl)-sn-glycero-3-phosphate + octadecanoyl-CoA = 1-(9Z-octadecenoyl)-2-octadecanoyl-sn-glycero-3-phosphate + CoA. It carries out the reaction nonadecanoyl-CoA + 1-(9Z-octadecenoyl)-sn-glycero-3-phosphate = 1-(9Z)-octadecenoyl-2-nonadecanoyl-sn-glycero-3-phosphate + CoA. The catalysed reaction is 1-(9Z-octadecenoyl)-sn-glycero-3-phosphate + (5Z,8Z,11Z,14Z)-eicosatetraenoyl-CoA = 1-(9Z)-octadecenoyl-2-(5Z,8Z,11Z,14Z)-eicosatetraenoyl-sn-glycero-3-phosphate + CoA. It catalyses the reaction 1-(9Z-octadecenoyl)-sn-glycero-3-phosphate + (9Z)-octadecenoyl-CoA = 1,2-di-(9Z-octadecenoyl)-sn-glycero-3-phosphate + CoA. The enzyme catalyses 1-(9Z-octadecenoyl)-sn-glycero-3-phosphate + (9Z,12Z)-octadecadienoyl-CoA = 1-(9Z)-octadecenoyl-2-(9Z,12Z)-octadecadienoyl-sn-glycero-3-phosphate + CoA. It carries out the reaction 1-(9Z-octadecenoyl)-sn-glycero-3-phosphocholine + (5Z,8Z,11Z,14Z)-eicosatetraenoyl-CoA = 1-(9Z)-octadecenoyl-2-(5Z,8Z,11Z,14Z)-icosatetraenoyl-sn-glycero-3-phosphocholine + CoA. The catalysed reaction is 1-(9Z-octadecenoyl)-sn-glycero-3-phospho-(1D-myo-inositol) + (5Z,8Z,11Z,14Z)-eicosatetraenoyl-CoA = 1-(9Z-octadecenoyl)-2-(5Z,8Z,11Z,14Z-eicosatetraenoyl)-sn-glycero-3-phospho-1D-myo-inositol + CoA. It catalyses the reaction 1-(9Z-octadecenoyl)-sn-glycero-3-phospho-L-serine + (5Z,8Z,11Z,14Z)-eicosatetraenoyl-CoA = 1-(9Z-octadecenoyl)-2-(5Z,8Z,11Z,14Z-eicosatetraenoyl)-sn-glycero-3-phospho-L-serine + CoA. The enzyme catalyses 1-hexadecanoyl-sn-glycero-3-phosphate + (9Z)-octadecenoyl-CoA = 1-hexadecanoyl-2-(9Z-octadecenoyl)-sn-glycero-3-phosphate + CoA. It carries out the reaction 1-hexadecanoyl-sn-glycero-3-phosphate + (5Z,8Z,11Z,14Z)-eicosatetraenoyl-CoA = 1-hexadecanoyl-2-(5Z,8Z,11Z,14Z-eicosatetraenoyl)-sn-glycero-3-phosphate + CoA. The catalysed reaction is 1-heptadecanoyl-sn-glycero-3-phosphate + (5Z,8Z,11Z,14Z)-eicosatetraenoyl-CoA = 1-heptadecanoyl-2-(5Z,8Z,11Z,14Z)-eicosatetraenoyl-sn-glycero-3-phosphate + CoA. It catalyses the reaction 1-octadecanoyl-sn-glycero-3-phosphate + (9Z)-octadecenoyl-CoA = 1-octadecanoyl-2-(9Z-octadecenoyl)-sn-glycero-3-phosphate + CoA. The enzyme catalyses 1-octadecanoyl-sn-glycero-3-phosphate + (5Z,8Z,11Z,14Z)-eicosatetraenoyl-CoA = 1-octadecanoyl-2-(5Z,8Z,11Z,14Z-eicosatetraenoyl)-sn-glycero-3-phosphate + CoA. It carries out the reaction 1-(9Z-octadecenoyl)-sn-glycero-3-phosphate + hexadecanoyl-CoA = 1-hexadecanoyl-2-(9Z-octadecenoyl)-sn-glycero-3-phosphate + CoA. The catalysed reaction is 1-O-(9Z-octadecenyl)-sn-glycero-3-phosphate + (5Z,8Z,11Z,14Z)-eicosatetraenoyl-CoA = 1-O-(9Z-octadecenyl)-2-(5Z,8Z,11Z,14Z-eicosatetraenoyl)-sn-glycero-3-phosphate + CoA. It catalyses the reaction a 1-acyl-sn-glycero-3-phospho-(1D-myo-inositol) + (5Z,8Z,11Z,14Z)-eicosatetraenoyl-CoA = a 1-acyl-2-(5Z,8Z,11Z,14Z-eicosatetraenoyl)-sn-glycero-3-phospho-(1D-myo-inositol) + CoA. The protein operates within phospholipid metabolism; CDP-diacylglycerol biosynthesis; CDP-diacylglycerol from sn-glycerol 3-phosphate: step 2/3. Its function is as follows. Converts 1-acyl-sn-glycerol-3-phosphate (lysophosphatidic acid or LPA) into 1,2-diacyl-sn-glycerol-3-phosphate (phosphatidic acid or PA) by incorporating an acyl moiety at the sn-2 position of the glycerol backbone. Acts on LPA containing saturated or unsaturated fatty acids C16:0-C20:4 at the sn-1 position using C18:1, C20:4 or C18:2-CoA as the acyl donor. Also acts on lysophosphatidylcholine, lysophosphatidylinositol and lysophosphatidylserine using C18:1 or C20:4-CoA. Has a preference for arachidonoyl-CoA as a donor. Also has a modest lysophosphatidylinositol acyltransferase (LPIAT) activity, converts lysophosphatidylinositol (LPI) into phosphatidylinositol. This chain is 1-acyl-sn-glycerol-3-phosphate acyltransferase gamma (AGPAT3), found in Pongo abelii (Sumatran orangutan).